The chain runs to 601 residues: Proteasome-associated ATPase (601 aa).

Gly residues predominate over residues 1–15 (MSGPRSGSGSGGSTG). The tract at residues 1–31 (MSGPRSGSGSGGSTGRPGDAESRRSAYEKEA) is disordered. Positions 18 to 31 (GDAESRRSAYEKEA) are enriched in basic and acidic residues. The stretch at 18 to 106 (GDAESRRSAY…LKEEVDRLAQ (89 aa)) forms a coiled coil. Position 289 to 294 (289 to 294 (GCGKTL)) interacts with ATP. The segment at 600–601 (YL) is docks into pockets in the proteasome alpha-ring.

This sequence belongs to the AAA ATPase family. As to quaternary structure, homohexamer. Assembles into a hexameric ring structure that caps the 20S proteasome core. Strongly interacts with the prokaryotic ubiquitin-like protein Pup through a hydrophobic interface; the interacting region of ARC lies in its N-terminal coiled-coil domain. There is one Pup binding site per ARC hexamer ring. Upon ATP-binding, the C-terminus of ARC interacts with the alpha-rings of the proteasome core, possibly by binding to the intersubunit pockets.

It functions in the pathway protein degradation; proteasomal Pup-dependent pathway. Functionally, ATPase which is responsible for recognizing, binding, unfolding and translocation of pupylated proteins into the bacterial 20S proteasome core particle. May be essential for opening the gate of the 20S proteasome via an interaction with its C-terminus, thereby allowing substrate entry and access to the site of proteolysis. Thus, the C-termini of the proteasomal ATPase may function like a 'key in a lock' to induce gate opening and therefore regulate proteolysis. This Frankia alni (strain DSM 45986 / CECT 9034 / ACN14a) protein is Proteasome-associated ATPase.